A 1342-amino-acid polypeptide reads, in one-letter code: DNA-directed RNA polymerase subunit beta (1342 aa).

The protein belongs to the RNA polymerase beta chain family. The RNAP catalytic core consists of 2 alpha, 1 beta, 1 beta' and 1 omega subunit. When a sigma factor is associated with the core the holoenzyme is formed, which can initiate transcription.

The enzyme catalyses RNA(n) + a ribonucleoside 5'-triphosphate = RNA(n+1) + diphosphate. DNA-dependent RNA polymerase catalyzes the transcription of DNA into RNA using the four ribonucleoside triphosphates as substrates. This is DNA-directed RNA polymerase subunit beta from Pasteurella multocida (strain Pm70).